Reading from the N-terminus, the 253-residue chain is Adenosylcobinamide-GDP ribazoletransferase (253 aa).

A run of 7 helical transmembrane segments spans residues 33-53 (ISPL…YVLL), 56-76 (ILEA…RGFN), 106-126 (IGSG…VALL), 132-152 (FYTI…GLYI), 178-198 (VLLF…FLVF), 209-229 (LGGS…PLFL), and 233-253 (EITN…LYLH).

It belongs to the CobS family. Mg(2+) serves as cofactor.

The protein localises to the cell membrane. The catalysed reaction is alpha-ribazole + adenosylcob(III)inamide-GDP = adenosylcob(III)alamin + GMP + H(+). It carries out the reaction alpha-ribazole 5'-phosphate + adenosylcob(III)inamide-GDP = adenosylcob(III)alamin 5'-phosphate + GMP + H(+). The protein operates within cofactor biosynthesis; adenosylcobalamin biosynthesis; adenosylcobalamin from cob(II)yrinate a,c-diamide: step 7/7. Its function is as follows. Joins adenosylcobinamide-GDP and alpha-ribazole to generate adenosylcobalamin (Ado-cobalamin). Also synthesizes adenosylcobalamin 5'-phosphate from adenosylcobinamide-GDP and alpha-ribazole 5'-phosphate. This chain is Adenosylcobinamide-GDP ribazoletransferase, found in Saccharolobus islandicus (strain M.16.27) (Sulfolobus islandicus).